The primary structure comprises 632 residues: Golgin subfamily A member 8H (632 aa).

Residues 1–77 (MAEETQHNKL…SSATLKDLES (77 aa)) form a disordered region. Coiled coils occupy residues 110-201 (VEHQ…LSSR) and 240-468 (ECAE…EKAD). Basic and acidic residues-rich tracts occupy residues 352–362 (KQEERIQEQHK) and 427–440 (HGGE…EEAP). 3 disordered regions span residues 352-379 (KQEE…EPNN), 423-452 (PGEG…DPES), and 496-524 (LSEP…DEGE). Residues 508–520 (LGGGHHQAGAQGG) are compositionally biased toward gly residues.

Belongs to the GOLGA8 family.

This Homo sapiens (Human) protein is Golgin subfamily A member 8H (GOLGA8H).